The following is a 68-amino-acid chain: Sec-independent protein translocase protein TatA (68 aa).

Residues M1–G21 traverse the membrane as a helical segment. The tract at residues E46–R68 is disordered. A compositionally biased stretch (basic and acidic residues) spans K53–R68.

It belongs to the TatA/E family. In terms of assembly, the Tat system comprises two distinct complexes: a TatABC complex, containing multiple copies of TatA, TatB and TatC subunits, and a separate TatA complex, containing only TatA subunits. Substrates initially bind to the TatABC complex, which probably triggers association of the separate TatA complex to form the active translocon.

The protein resides in the cell inner membrane. Functionally, part of the twin-arginine translocation (Tat) system that transports large folded proteins containing a characteristic twin-arginine motif in their signal peptide across membranes. TatA could form the protein-conducting channel of the Tat system. This chain is Sec-independent protein translocase protein TatA, found in Sinorhizobium fredii (strain NBRC 101917 / NGR234).